Here is a 299-residue protein sequence, read N- to C-terminus: MNEFDRVRDYLTDLQDRICAAVEAADGKARFAEDLWKREEGGGGRTRILRDGAVFEQAGIGFSDVSGTRLPPSASAHRPELAGATWRACGVSLVFHPHNPYIPTTHMNVRYFRAERDGEVVAAWFGGGFDLTPFYPFDEDVQHWHRVAQALCEPFGQERYAAHKRWCDEYFFLRHRNETRGVGGLFFDDLGQDFERDFAYQRAVGDGFLDAYIPIVQRRKDTPYGEREREFQLYRRGRYVEFNLVYDRGTLFGLQSGGRAESILMSLPPRVRWEYGFTPEPGSAEARLADYLIPRDWLG.

S92 contacts substrate. A divalent metal cation-binding residues include H96 and H106. H106 (proton donor) is an active-site residue. Residue 108 to 110 (NVR) participates in substrate binding. Residues H145 and H175 each coordinate a divalent metal cation. The segment at 239–274 (YVEFNLVYDRGTLFGLQSGGRAESILMSLPPRVRWE) is important for dimerization. 257 to 259 (GGR) serves as a coordination point for substrate.

The protein belongs to the aerobic coproporphyrinogen-III oxidase family. Homodimer. The cofactor is a divalent metal cation.

It is found in the cytoplasm. It carries out the reaction coproporphyrinogen III + O2 + 2 H(+) = protoporphyrinogen IX + 2 CO2 + 2 H2O. It participates in porphyrin-containing compound metabolism; protoporphyrin-IX biosynthesis; protoporphyrinogen-IX from coproporphyrinogen-III (O2 route): step 1/1. Its function is as follows. Involved in the heme biosynthesis. Catalyzes the aerobic oxidative decarboxylation of propionate groups of rings A and B of coproporphyrinogen-III to yield the vinyl groups in protoporphyrinogen-IX. This chain is Oxygen-dependent coproporphyrinogen-III oxidase, found in Xanthomonas euvesicatoria pv. vesicatoria (strain 85-10) (Xanthomonas campestris pv. vesicatoria).